A 1029-amino-acid chain; its full sequence is Eukaryotic translation initiation factor 3 subunit A (1029 aa).

Positions 92 to 121 form a coiled coil; sequence LKKFIELAEQKVTEAQAKADEIQSSLESAA. One can recognise a PCI domain in the interval 339–523; it reads MTKAASFVLL…GVLTFESDIF (185 aa). A coiled-coil region spans residues 606-903; sequence TRRAIIEKRK…EEEAEQRRAA (298 aa). 4 stretches are compositionally biased toward basic and acidic residues: residues 621 to 632, 644 to 666, 797 to 901, and 913 to 924; these read ALQKKQREEENR, EQQR…EQDR, TEKR…EQRR, and GPAREASPERTA. Disordered regions lie at residues 621–666 and 797–1029; these read ALQK…EQDR and TEKR…KQQQ. Residues 943–960 are compositionally biased toward low complexity; sequence AKAAASAGEQPAAAQEAT. Residues 977-993 are compositionally biased toward basic and acidic residues; sequence ATRDGPSDSRDLSHARE.

It belongs to the eIF-3 subunit A family. As to quaternary structure, component of the eukaryotic translation initiation factor 3 (eIF-3) complex.

The protein localises to the cytoplasm. Its function is as follows. RNA-binding component of the eukaryotic translation initiation factor 3 (eIF-3) complex, which is involved in protein synthesis of a specialized repertoire of mRNAs and, together with other initiation factors, stimulates binding of mRNA and methionyl-tRNAi to the 40S ribosome. The eIF-3 complex specifically targets and initiates translation of a subset of mRNAs involved in cell proliferation. In Coccidioides immitis (strain RS) (Valley fever fungus), this protein is Eukaryotic translation initiation factor 3 subunit A.